The primary structure comprises 355 residues: Phosphoribosylformylglycinamidine cyclo-ligase (355 aa).

It belongs to the AIR synthase family.

It is found in the cytoplasm. It carries out the reaction 2-formamido-N(1)-(5-O-phospho-beta-D-ribosyl)acetamidine + ATP = 5-amino-1-(5-phospho-beta-D-ribosyl)imidazole + ADP + phosphate + H(+). It participates in purine metabolism; IMP biosynthesis via de novo pathway; 5-amino-1-(5-phospho-D-ribosyl)imidazole from N(2)-formyl-N(1)-(5-phospho-D-ribosyl)glycinamide: step 2/2. This is Phosphoribosylformylglycinamidine cyclo-ligase from Methylobacterium sp. (strain 4-46).